The chain runs to 249 residues: NAD-dependent protein deacylase 2 (249 aa).

Residues 1–240 (MNVADLLASS…PRLVEEVKRR (240 aa)) form the Deacetylase sirtuin-type domain. Residue 18–37 (GAGISAESGVPTFRGPGGLW) participates in NAD(+) binding. Positions 62 and 65 each coordinate substrate. 96–99 (QNVD) lines the NAD(+) pocket. The Proton acceptor role is filled by His-114. Positions 122, 125, 142, and 145 each coordinate Zn(2+). Residues 182–184 (GTS), 208–210 (NVE), and Ala-226 contribute to the NAD(+) site.

It belongs to the sirtuin family. Class III subfamily. It depends on Zn(2+) as a cofactor.

The protein resides in the cytoplasm. It catalyses the reaction N(6)-acetyl-L-lysyl-[protein] + NAD(+) + H2O = 2''-O-acetyl-ADP-D-ribose + nicotinamide + L-lysyl-[protein]. It carries out the reaction N(6)-succinyl-L-lysyl-[protein] + NAD(+) + H2O = 2''-O-succinyl-ADP-D-ribose + nicotinamide + L-lysyl-[protein]. Its function is as follows. NAD-dependent lysine deacetylase and desuccinylase that specifically removes acetyl and succinyl groups on target proteins. Modulates the activities of several proteins which are inactive in their acylated form. Deacetylates the N-terminal lysine residue of Alba, the major archaeal chromatin protein and that, in turn, increases Alba's DNA binding affinity, thereby repressing transcription. The sequence is that of NAD-dependent protein deacylase 2 from Pyrobaculum aerophilum (strain ATCC 51768 / DSM 7523 / JCM 9630 / CIP 104966 / NBRC 100827 / IM2).